A 289-amino-acid polypeptide reads, in one-letter code: 4-diphosphocytidyl-2-C-methyl-D-erythritol kinase (289 aa).

Residue lysine 10 is part of the active site. 94-104 provides a ligand contact to ATP; the sequence is PVAAGLAGGSS. Aspartate 136 is an active-site residue.

Belongs to the GHMP kinase family. IspE subfamily.

The enzyme catalyses 4-CDP-2-C-methyl-D-erythritol + ATP = 4-CDP-2-C-methyl-D-erythritol 2-phosphate + ADP + H(+). It participates in isoprenoid biosynthesis; isopentenyl diphosphate biosynthesis via DXP pathway; isopentenyl diphosphate from 1-deoxy-D-xylulose 5-phosphate: step 3/6. Catalyzes the phosphorylation of the position 2 hydroxy group of 4-diphosphocytidyl-2C-methyl-D-erythritol. In Bacillus anthracis, this protein is 4-diphosphocytidyl-2-C-methyl-D-erythritol kinase.